A 316-amino-acid polypeptide reads, in one-letter code: Secreted effector protein SifB (316 aa).

It belongs to the Sif family.

The protein localises to the secreted. The protein resides in the host cytoplasm. Effector proteins function to alter host cell physiology and promote bacterial survival in host tissues. The polypeptide is Secreted effector protein SifB (sifB) (Salmonella typhimurium (strain LT2 / SGSC1412 / ATCC 700720)).